The following is a 283-amino-acid chain: 4-diphosphocytidyl-2-C-methyl-D-erythritol kinase (283 aa).

The active site involves Lys-10. 99-109 (PMGGGLGGGSS) provides a ligand contact to ATP. The active site involves Asp-141.

Belongs to the GHMP kinase family. IspE subfamily. In terms of assembly, homodimer.

It carries out the reaction 4-CDP-2-C-methyl-D-erythritol + ATP = 4-CDP-2-C-methyl-D-erythritol 2-phosphate + ADP + H(+). Its pathway is isoprenoid biosynthesis; isopentenyl diphosphate biosynthesis via DXP pathway; isopentenyl diphosphate from 1-deoxy-D-xylulose 5-phosphate: step 3/6. Catalyzes the phosphorylation of the position 2 hydroxy group of 4-diphosphocytidyl-2C-methyl-D-erythritol. This Citrobacter koseri (strain ATCC BAA-895 / CDC 4225-83 / SGSC4696) protein is 4-diphosphocytidyl-2-C-methyl-D-erythritol kinase.